Reading from the N-terminus, the 1221-residue chain is Coatomer subunit alpha (1221 aa).

9 WD repeats span residues 7–46 (TKASRVKGLSFHPTRPWILASLHSGSIHLYDYRIKTLLEK), 49–88 (EHEGPVRGINFHMTQPLFVSGGDDYKIKVWNYKQRRCLFT), 91–130 (GHKDYIRSVEFHREAPWIVSSSDDMVIRIWNWQSRTCIAE), 133–172 (GHNHYVMSALFHPKDDLVVSASLDQTIRIWDISGLKKKMT), 202–241 (GHDRGVNWASFHPTQPYIVSASDDHQVKLWRMNDPIVDTF), 243–282 (GHYNNVSCALFHPRQDLIISNSEDKTIRVWDIIKKSTVHM), 285–323 (RDHDRFWTLASHPNQNLFAAGHDSGMIVFKLERERPLFV), 358–399 (PSNN…SNTV), and 528–567 (WDDNGVFIYSTSNHLKYLLQNGDNGTIRTLESTIYITGVK). Residues 820–885 (GVEQSTSTPT…DDGGWERDDL (66 aa)) form a disordered region. Low complexity predominate over residues 844 to 857 (SQQQSSQQQQQQQQ). Residues 910-953 (PQPGPSFSMIWARNSQFAVDHIAAGSFESAMNILNSQIGAVNFD) form a WD 10 repeat.

As to quaternary structure, oligomeric complex that consists of at least the alpha, beta, beta', gamma, delta, epsilon and zeta subunits.

Its subcellular location is the cytoplasm. The protein localises to the golgi apparatus membrane. Functionally, the coatomer is a cytosolic protein complex that binds to dilysine motifs and reversibly associates with Golgi non-clathrin-coated vesicles, which further mediate biosynthetic protein transport from the ER, via the Golgi up to the trans Golgi network. Coatomer complex is required for budding from Golgi membranes, and is essential for the retrograde Golgi-to-ER transport of dilysine-tagged proteins. The sequence is that of Coatomer subunit alpha (copa) from Dictyostelium discoideum (Social amoeba).